The following is a 656-amino-acid chain: Chaperone protein HtpG (656 aa).

Residues 1–359 (MSAQVEQLEF…AEDMSLNVSR (359 aa)) form an a; substrate-binding region. A b region spans residues 360–575 (EILQQNRQIN…AFGITPALAR (216 aa)). Residues 576–656 (IYRASGQDVP…LLADLLSRSM (81 aa)) form a c region.

Belongs to the heat shock protein 90 family. Homodimer.

The protein localises to the cytoplasm. In terms of biological role, molecular chaperone. Has ATPase activity. This is Chaperone protein HtpG from Mycobacterium leprae (strain TN).